The sequence spans 126 residues: Prefoldin subunit beta (126 aa).

It belongs to the prefoldin subunit beta family. In terms of assembly, heterohexamer of two alpha and four beta subunits.

The protein resides in the cytoplasm. In terms of biological role, molecular chaperone capable of stabilizing a range of proteins. Seems to fulfill an ATP-independent, HSP70-like function in archaeal de novo protein folding. The sequence is that of Prefoldin subunit beta (pfdB) from Pyrobaculum aerophilum (strain ATCC 51768 / DSM 7523 / JCM 9630 / CIP 104966 / NBRC 100827 / IM2).